Consider the following 337-residue polypeptide: CMP-N-acetylneuraminate-beta-galactosamide-alpha-2,3-sialyltransferase 1 (337 aa).

The Cytoplasmic segment spans residues 1-4 (MRRK). The helical; Signal-anchor for type II membrane protein transmembrane segment at 5–25 (TLKYLTFFLLFIFLTSFVLNY) threads the bilayer. At 26 to 337 (SNTGVPSAWF…INKIRIFKGR (312 aa)) the chain is on the lumenal side. Intrachain disulfides connect cysteine 56/cysteine 61, cysteine 58/cysteine 136, and cysteine 139/cysteine 278. Asparagine 76 carries N-linked (GlcNAc...) asparagine glycosylation. Glutamine 102 serves as a coordination point for substrate. Asparagine 109 is a glycosylation site (N-linked (GlcNAc...) asparagine). Residues asparagine 144, asparagine 167, tyrosine 227, tyrosine 263, glycine 267, glycine 287, histidine 296, and histidine 313 each coordinate substrate. An N-linked (GlcNAc...) asparagine glycan is attached at asparagine 320.

This sequence belongs to the glycosyltransferase 29 family. In terms of processing, the soluble form derives from the membrane form by proteolytic processing. Highly expressed in submaxillary gland and to a much lesser extent in liver, lung, kidney, heart and brain.

It localises to the golgi apparatus. It is found in the golgi stack membrane. The protein resides in the trans-Golgi network membrane. The protein localises to the secreted. The enzyme catalyses a beta-D-galactosyl-(1-&gt;3)-N-acetyl-alpha-D-galactosaminyl derivative + CMP-N-acetyl-beta-neuraminate = an N-acetyl-alpha-neuraminyl-(2-&gt;3)-beta-D-galactosyl-(1-&gt;3)-N-acetyl-alpha-D-galactosaminyl derivative + CMP + H(+). It carries out the reaction a ganglioside GM1 (d18:1(4E)) + CMP-N-acetyl-beta-neuraminate = a ganglioside GD1a (d18:1(4E)) + CMP + H(+). The catalysed reaction is ganglioside GM1 (d18:1(4E)/18:0) + CMP-N-acetyl-beta-neuraminate = ganglioside GD1a (18:1(4E)/18:0) + CMP + H(+). It catalyses the reaction a ganglioside GA1 + CMP-N-acetyl-beta-neuraminate = a ganglioside GM1b + CMP + H(+). The enzyme catalyses a ganglioside GA1 (d18:1(4E)) + CMP-N-acetyl-beta-neuraminate = a ganglioside GM1b (d18:1(4E)) + CMP + H(+). It carries out the reaction a ganglioside GD1b + CMP-N-acetyl-beta-neuraminate = a ganglioside GT1b + CMP + H(+). The catalysed reaction is a 3-O-[beta-D-galactosyl-(1-&gt;3)-N-acetyl-alpha-D-galactosaminyl]-L-threonyl-[protein] + CMP-N-acetyl-beta-neuraminate = a 3-O-[N-acetyl-alpha-neuraminyl-(2-&gt;3)-beta-D-galactosyl-(1-&gt;3)-N-acetyl-alpha-D-galactosaminyl]-L-threonyl-[protein] + CMP + H(+). It catalyses the reaction a 3-O-[beta-D-galactosyl-(1-&gt;3)-N-acetyl-alpha-D-galactosaminyl]-L-seryl-[protein] + CMP-N-acetyl-beta-neuraminate = 3-O-[N-acetyl-alpha-neuraminyl-(2-&gt;3)-beta-D-galactosyl-(1-&gt;3)-N-acetyl-alpha-D-galactosaminyl]-L-seryl-[protein] + CMP + H(+). It functions in the pathway protein modification; protein glycosylation. Its pathway is glycolipid biosynthesis. A beta-galactoside alpha2-&gt;3 sialyltransferase involved in terminal sialylation of glycoproteins and glycolipids. Catalyzes the transfer of sialic acid (N-acetyl-neuraminic acid; Neu5Ac) from the nucleotide sugar donor CMP-Neu5Ac onto acceptor Galbeta-(1-&gt;3)-GalNAc-terminated glycoconjugates through an alpha2-3 linkage. Adds sialic acid to the core 1 O-glycan, Galbeta-(1-&gt;3)-GalNAc-O-Ser/Thr, which is a major structure of mucin-type O-glycans. As part of a homeostatic mechanism that regulates CD8-positive T cell numbers, sialylates core 1 O-glycans of T cell glycoproteins, SPN/CD43 and PTPRC/CD45. Prevents premature apoptosis of thymic CD8-positive T cells prior to peripheral emigration, whereas in the secondary lymphoid organs controls the survival of CD8-positive memory T cells generated following a successful immune response. Transfers sialic acid to asialofetuin, presumably onto Galbeta-(1-&gt;3)-GalNAc-O-Ser. Sialylates GM1a, GA1 and GD1b gangliosides to form GD1a, GM1b and GT1b, respectively. This is CMP-N-acetylneuraminate-beta-galactosamide-alpha-2,3-sialyltransferase 1 (St3gal1) from Mus musculus (Mouse).